The following is a 254-amino-acid chain: GTP cyclohydrolase III (254 aa).

The protein belongs to the archaeal-type GTP cyclohydrolase family.

It carries out the reaction GTP + 3 H2O = 2-amino-5-formylamino-6-(5-phospho-D-ribosylamino)pyrimidin-4(3H)-one + 2 phosphate + 2 H(+). In terms of biological role, catalyzes the formation of 2-amino-5-formylamino-6-ribofuranosylamino-4(3H)-pyrimidinone ribonucleotide monophosphate and inorganic phosphate from GTP. Also has an independent pyrophosphate phosphohydrolase activity. This Methanobrevibacter smithii (strain ATCC 35061 / DSM 861 / OCM 144 / PS) protein is GTP cyclohydrolase III.